The sequence spans 509 residues: L-aspartate semialdehyde sulfurtransferase (509 aa).

The Cysteine persulfide intermediate role is filled by Cys133. CBS domains lie at 394 to 450 (LSKP…NKKT) and 455 to 509 (MTRN…GGKK). Residues Ser395, Ile399, and His421 each coordinate S-methyl-5'-thioadenosine. S-adenosyl-L-methionine is bound by residues Asp439, Thr456, Ile460, and 479–482 (NISG). S-methyl-5'-thioadenosine is bound at residue 497 to 500 (TSED).

This sequence belongs to the L-aspartate semialdehyde sulfurtransferase family. As to quaternary structure, homodimer. May form a complex with MJ0099.

It carries out the reaction L-aspartate 4-semialdehyde + reduced 2[4Fe-4S]-[ferredoxin] + hydrogen sulfide + 3 H(+) = oxidized 2[4Fe-4S]-[ferredoxin] + L-homocysteine + H2O. Its pathway is amino-acid biosynthesis. The ligand-induced conformational reorganization of the protein could be an important regulatory mechanism. In terms of biological role, required for O-acetylhomoserine sulfhydrylase (OAHS)-independent homocysteine (Hcy) biosynthesis. Together with MJ0099, catalyzes the condensation of sulfide with aspartate semialdehyde to generate homocysteine. Likely functions through persulfide intermediate. The polypeptide is L-aspartate semialdehyde sulfurtransferase (Methanocaldococcus jannaschii (strain ATCC 43067 / DSM 2661 / JAL-1 / JCM 10045 / NBRC 100440) (Methanococcus jannaschii)).